We begin with the raw amino-acid sequence, 122 residues long: Large ribosomal subunit protein uL14 (122 aa).

The protein belongs to the universal ribosomal protein uL14 family. Part of the 50S ribosomal subunit. Forms a cluster with proteins L3 and L19. In the 70S ribosome, L14 and L19 interact and together make contacts with the 16S rRNA in bridges B5 and B8.

Binds to 23S rRNA. Forms part of two intersubunit bridges in the 70S ribosome. The chain is Large ribosomal subunit protein uL14 from Kosmotoga olearia (strain ATCC BAA-1733 / DSM 21960 / TBF 19.5.1).